We begin with the raw amino-acid sequence, 364 residues long: Chorismate synthase (364 aa).

Residue R47 coordinates NADP(+). FMN is bound by residues 124–126 (RGS), 240–241 (NA), G284, 299–303 (KPTPS), and R326.

The protein belongs to the chorismate synthase family. FMNH2 is required as a cofactor.

The catalysed reaction is 5-O-(1-carboxyvinyl)-3-phosphoshikimate = chorismate + phosphate. It functions in the pathway metabolic intermediate biosynthesis; chorismate biosynthesis; chorismate from D-erythrose 4-phosphate and phosphoenolpyruvate: step 7/7. Catalyzes the anti-1,4-elimination of the C-3 phosphate and the C-6 proR hydrogen from 5-enolpyruvylshikimate-3-phosphate (EPSP) to yield chorismate, which is the branch point compound that serves as the starting substrate for the three terminal pathways of aromatic amino acid biosynthesis. This reaction introduces a second double bond into the aromatic ring system. In Methanobrevibacter smithii (strain ATCC 35061 / DSM 861 / OCM 144 / PS), this protein is Chorismate synthase.